The following is a 138-amino-acid chain: Large ribosomal subunit protein uL16 (138 aa).

Positions 1–13 (MLQPSRRKYRKEQ) are enriched in basic residues. The disordered stretch occupies residues 1-24 (MLQPSRRKYRKEQKGRNTGLASRG).

It belongs to the universal ribosomal protein uL16 family. In terms of assembly, part of the 50S ribosomal subunit.

Binds 23S rRNA and is also seen to make contacts with the A and possibly P site tRNAs. This Bordetella bronchiseptica (strain ATCC BAA-588 / NCTC 13252 / RB50) (Alcaligenes bronchisepticus) protein is Large ribosomal subunit protein uL16.